The sequence spans 51 residues: Large ribosomal subunit protein eL39 (51 aa).

The protein belongs to the eukaryotic ribosomal protein eL39 family.

This Methanopyrus kandleri (strain AV19 / DSM 6324 / JCM 9639 / NBRC 100938) protein is Large ribosomal subunit protein eL39.